A 124-amino-acid chain; its full sequence is UPF0102 protein Blon_1698/BLIJ_1758 (124 aa).

This sequence belongs to the UPF0102 family.

This chain is UPF0102 protein Blon_1698/BLIJ_1758, found in Bifidobacterium longum subsp. infantis (strain ATCC 15697 / DSM 20088 / JCM 1222 / NCTC 11817 / S12).